Here is a 209-residue protein sequence, read N- to C-terminus: Imidazole glycerol phosphate synthase subunit HisH (209 aa).

In terms of domain architecture, Glutamine amidotransferase type-1 spans 1 to 205 (MIAIIDYGMG…KGVVESWKSS (205 aa)). Cys79 acts as the Nucleophile in catalysis. Catalysis depends on residues His180 and Glu182.

In terms of assembly, heterodimer of HisH and HisF.

The protein resides in the cytoplasm. The enzyme catalyses 5-[(5-phospho-1-deoxy-D-ribulos-1-ylimino)methylamino]-1-(5-phospho-beta-D-ribosyl)imidazole-4-carboxamide + L-glutamine = D-erythro-1-(imidazol-4-yl)glycerol 3-phosphate + 5-amino-1-(5-phospho-beta-D-ribosyl)imidazole-4-carboxamide + L-glutamate + H(+). The catalysed reaction is L-glutamine + H2O = L-glutamate + NH4(+). The protein operates within amino-acid biosynthesis; L-histidine biosynthesis; L-histidine from 5-phospho-alpha-D-ribose 1-diphosphate: step 5/9. Its function is as follows. IGPS catalyzes the conversion of PRFAR and glutamine to IGP, AICAR and glutamate. The HisH subunit catalyzes the hydrolysis of glutamine to glutamate and ammonia as part of the synthesis of IGP and AICAR. The resulting ammonia molecule is channeled to the active site of HisF. In Bacillus cereus (strain ATCC 10987 / NRS 248), this protein is Imidazole glycerol phosphate synthase subunit HisH.